Consider the following 311-residue polypeptide: Nod factor export ATP-binding protein I (311 aa).

Residues 13 to 243 (IDLAGVSKSY…QIGCPVIEIY (231 aa)) form the ABC transporter domain. ATP is bound at residue 45–52 (GPNGAGKS).

This sequence belongs to the ABC transporter superfamily. Lipooligosaccharide exporter (TC 3.A.1.102) family. The complex is composed of two ATP-binding proteins (NodI) and two transmembrane proteins (NodJ).

The protein localises to the cell inner membrane. Part of the ABC transporter complex NodIJ involved in the export of the nodulation factors (Nod factors), the bacterial signal molecules that induce symbiosis and subsequent nodulation induction. Nod factors are LCO (lipo-chitin oligosaccharide), a modified beta-1,4-linked N-acetylglucosamine oligosaccharide. This subunit is responsible for energy coupling to the transport system. This chain is Nod factor export ATP-binding protein I, found in Rhizobium johnstonii (strain DSM 114642 / LMG 32736 / 3841) (Rhizobium leguminosarum bv. viciae).